Reading from the N-terminus, the 80-residue chain is Cytochrome c oxidase subunit 7B, mitochondrial (80 aa).

Residues 1–24 (MLPLAKNALSRLQVRSIQQVVARQ) constitute a mitochondrion transit peptide. Topologically, residues 25–32 (SHQKKTPT) are mitochondrial matrix. A helical transmembrane segment spans residues 33-59 (FHDKYGNAVLAGGSIFCISAWTYTATQ). Over 60–80 (IGIEWNLSPVGRVTPKEWRDQ) the chain is Mitochondrial intermembrane.

Belongs to the cytochrome c oxidase VIIb family. In terms of assembly, component of the cytochrome c oxidase (complex IV, CIV), a multisubunit enzyme composed of 14 subunits. The complex is composed of a catalytic core of 3 subunits MT-CO1, MT-CO2 and MT-CO3, encoded in the mitochondrial DNA, and 11 supernumerary subunits COX4I, COX5A, COX5B, COX6A, COX6B, COX6C, COX7A, COX7B, COX7C, COX8 and NDUFA4, which are encoded in the nuclear genome. The complex exists as a monomer or a dimer and forms supercomplexes (SCs) in the inner mitochondrial membrane with NADH-ubiquinone oxidoreductase (complex I, CI) and ubiquinol-cytochrome c oxidoreductase (cytochrome b-c1 complex, complex III, CIII), resulting in different assemblies (supercomplex SCI(1)III(2)IV(1) and megacomplex MCI(2)III(2)IV(2)).

Its subcellular location is the mitochondrion inner membrane. Its pathway is energy metabolism; oxidative phosphorylation. In terms of biological role, component of the cytochrome c oxidase, the last enzyme in the mitochondrial electron transport chain which drives oxidative phosphorylation. The respiratory chain contains 3 multisubunit complexes succinate dehydrogenase (complex II, CII), ubiquinol-cytochrome c oxidoreductase (cytochrome b-c1 complex, complex III, CIII) and cytochrome c oxidase (complex IV, CIV), that cooperate to transfer electrons derived from NADH and succinate to molecular oxygen, creating an electrochemical gradient over the inner membrane that drives transmembrane transport and the ATP synthase. Cytochrome c oxidase is the component of the respiratory chain that catalyzes the reduction of oxygen to water. Electrons originating from reduced cytochrome c in the intermembrane space (IMS) are transferred via the dinuclear copper A center (CU(A)) of subunit 2 and heme A of subunit 1 to the active site in subunit 1, a binuclear center (BNC) formed by heme A3 and copper B (CU(B)). The BNC reduces molecular oxygen to 2 water molecules using 4 electrons from cytochrome c in the IMS and 4 protons from the mitochondrial matrix. Plays a role in proper central nervous system (CNS) development in vertebrates. This is Cytochrome c oxidase subunit 7B, mitochondrial (Cox7b) from Rattus norvegicus (Rat).